A 238-amino-acid polypeptide reads, in one-letter code: MPEHHQYQFEFMGLLFNGTTMITTTIAMAIVVIITVIGCRKLAMRPTGLQNFIEWVVDFCRGIIKANMDWKVGGRFIVLAYALLFYVFVANMMGIPFELVTKEGHNVFWKSPTSDPVLTLTMAVFIVVLTHIYGIMVTGPSTYGKSWFTPKWFLFPFKVIEEGSNALTLGMRLFGNIYAKEILMLLLVSLGTTAVYWGIFAFVPLIVWQAFSIFIGSLQAYIFAMLAMVYMSHKVEQH.

A run of 5 helical transmembrane segments spans residues 18-38, 76-96, 117-137, 173-193, and 208-230; these read GTTMITTTIAMAIVVIITVIG, FIVLAYALLFYVFVANMMGIP, VLTLTMAVFIVVLTHIYGIMV, LFGNIYAKEILMLLLVSLGTT, and WQAFSIFIGSLQAYIFAMLAMVY.

Belongs to the ATPase A chain family. In terms of assembly, F-type ATPases have 2 components, CF(1) - the catalytic core - and CF(0) - the membrane proton channel. CF(1) has five subunits: alpha(3), beta(3), gamma(1), delta(1), epsilon(1). CF(0) has three main subunits: a(1), b(2) and c(9-12). The alpha and beta chains form an alternating ring which encloses part of the gamma chain. CF(1) is attached to CF(0) by a central stalk formed by the gamma and epsilon chains, while a peripheral stalk is formed by the delta and b chains.

It localises to the cell membrane. Its function is as follows. Key component of the proton channel; it plays a direct role in the translocation of protons across the membrane. This is ATP synthase subunit a from Shouchella clausii (strain KSM-K16) (Alkalihalobacillus clausii).